Here is a 189-residue protein sequence, read N- to C-terminus: Putative transcription factor ovo-like protein 3 (189 aa).

The disordered stretch occupies residues 1 to 20 (MPRVFLVRSRRPQPPNWSHL). 4 C2H2-type zinc fingers span residues 69 to 91 (LGCPLCPKAFPLQRMLTRHLKCH), 97 to 119 (HVCHYCGKGFHDAFDLKRHMRTH), 125 to 148 (FRCGACGKAFTQRCSLEAHLAKVH), and 164 to 186 (HVCEDCGFTSSRPDAYAQHRTLH).

This sequence belongs to the krueppel C2H2-type zinc-finger protein family.

The protein resides in the nucleus. May act as a transcription regulator. The sequence is that of Putative transcription factor ovo-like protein 3 (Ovol3) from Mus musculus (Mouse).